A 254-amino-acid polypeptide reads, in one-letter code: Leucyl/phenylalanyl-tRNA--protein transferase (254 aa).

Belongs to the L/F-transferase family.

The protein resides in the cytoplasm. The catalysed reaction is N-terminal L-lysyl-[protein] + L-leucyl-tRNA(Leu) = N-terminal L-leucyl-L-lysyl-[protein] + tRNA(Leu) + H(+). It carries out the reaction N-terminal L-arginyl-[protein] + L-leucyl-tRNA(Leu) = N-terminal L-leucyl-L-arginyl-[protein] + tRNA(Leu) + H(+). The enzyme catalyses L-phenylalanyl-tRNA(Phe) + an N-terminal L-alpha-aminoacyl-[protein] = an N-terminal L-phenylalanyl-L-alpha-aminoacyl-[protein] + tRNA(Phe). Functionally, functions in the N-end rule pathway of protein degradation where it conjugates Leu, Phe and, less efficiently, Met from aminoacyl-tRNAs to the N-termini of proteins containing an N-terminal arginine or lysine. The sequence is that of Leucyl/phenylalanyl-tRNA--protein transferase from Burkholderia cenocepacia (strain HI2424).